Reading from the N-terminus, the 361-residue chain is UDP-N-acetylglucosamine--N-acetylmuramyl-(pentapeptide) pyrophosphoryl-undecaprenol N-acetylglucosamine transferase (361 aa).

UDP-N-acetyl-alpha-D-glucosamine is bound by residues 12–14 (TGG), Asn-126, Arg-167, Ser-192, Ile-247, and Gln-292.

This sequence belongs to the glycosyltransferase 28 family. MurG subfamily.

It is found in the cell inner membrane. The enzyme catalyses di-trans,octa-cis-undecaprenyl diphospho-N-acetyl-alpha-D-muramoyl-L-alanyl-D-glutamyl-meso-2,6-diaminopimeloyl-D-alanyl-D-alanine + UDP-N-acetyl-alpha-D-glucosamine = di-trans,octa-cis-undecaprenyl diphospho-[N-acetyl-alpha-D-glucosaminyl-(1-&gt;4)]-N-acetyl-alpha-D-muramoyl-L-alanyl-D-glutamyl-meso-2,6-diaminopimeloyl-D-alanyl-D-alanine + UDP + H(+). It participates in cell wall biogenesis; peptidoglycan biosynthesis. In terms of biological role, cell wall formation. Catalyzes the transfer of a GlcNAc subunit on undecaprenyl-pyrophosphoryl-MurNAc-pentapeptide (lipid intermediate I) to form undecaprenyl-pyrophosphoryl-MurNAc-(pentapeptide)GlcNAc (lipid intermediate II). The protein is UDP-N-acetylglucosamine--N-acetylmuramyl-(pentapeptide) pyrophosphoryl-undecaprenol N-acetylglucosamine transferase of Syntrophus aciditrophicus (strain SB).